The following is a 468-amino-acid chain: Ubiquitin carboxyl-terminal hydrolase 17-like protein B (468 aa).

The interval methionine 1–proline 20 is disordered. The 298-residue stretch at cysteine 51 to glutamine 348 folds into the USP domain. Cysteine 60 (nucleophile) is an active-site residue. Histidine 307 acts as the Proton acceptor in catalysis. The tract at residues lysine 374–glycine 449 is disordered. Basic and acidic residues predominate over residues cysteine 394–lysine 403. The segment covering glycine 422 to glutamate 434 has biased composition (polar residues).

The protein belongs to the peptidase C19 family. USP17 subfamily. Ubiquitinated. As to expression, detected in brain, heart, liver, lung, kidney, ovary and spleen.

It carries out the reaction Thiol-dependent hydrolysis of ester, thioester, amide, peptide and isopeptide bonds formed by the C-terminal Gly of ubiquitin (a 76-residue protein attached to proteins as an intracellular targeting signal).. Inhibited by ubiquitin aldehyde. Functionally, deubiquitinating enzyme that removes conjugated ubiquitin from specific proteins to regulate different cellular processes. The protein is Ubiquitin carboxyl-terminal hydrolase 17-like protein B of Mus musculus (Mouse).